A 681-amino-acid chain; its full sequence is U3 small nucleolar ribonucleoprotein protein MPP10 (681 aa).

Phosphoserine occurs at positions 61, 120, and 140. A coiled-coil region spans residues Glu109–Leu139. The segment covering Glu111–Gly144 has biased composition (acidic residues). 3 disordered regions span residues Glu111–Asp202, Leu215–Lys256, and Tyr268–Gln365. Positions Asp145 to Lys163 are enriched in basic and acidic residues. Phosphoserine occurs at positions 164, 168, and 172. Residues Leu215–Asp227 show a composition bias toward basic and acidic residues. Composition is skewed to acidic residues over residues Gly228 to Glu248 and Asp273 to Asn322. A phosphoserine mark is found at Ser244, Ser247, Ser277, and Ser346. Residues Ala349 to Lys383 are a coiled coil. Residue Lys351 forms a Glycyl lysine isopeptide (Lys-Gly) (interchain with G-Cter in SUMO2) linkage. Positions Gln352 to Gln365 are enriched in basic and acidic residues. Residues Lys383 and Lys395 each participate in a glycyl lysine isopeptide (Lys-Gly) (interchain with G-Cter in SUMO2) cross-link. Residues Ala471–Asn491 are a coiled coil. Residue Lys556 forms a Glycyl lysine isopeptide (Lys-Gly) (interchain with G-Cter in SUMO2) linkage. Positions Lys560–Lys576 are enriched in basic and acidic residues. The tract at residues Lys560–Gln644 is disordered. A coiled-coil region spans residues Lys575–Asn604. The span at Arg577–Leu599 shows a compositional bias: basic residues. Residue Lys609 is modified to N6-acetyllysine. The span at Leu630–Leu640 shows a compositional bias: basic and acidic residues. Glycyl lysine isopeptide (Lys-Gly) (interchain with G-Cter in SUMO2) cross-links involve residues Lys632 and Lys649. The segment at Gln657–Leu681 is disordered. Over residues Lys662–Leu681 the composition is skewed to basic and acidic residues.

The protein belongs to the MPP10 family. As to quaternary structure, part of the small subunit (SSU) processome, composed of more than 70 proteins and the RNA chaperone small nucleolar RNA (snoRNA) U3. Component of a heterotrimeric complex containing IMP3, IMP4 and MPHOSPH10. Interacts with IMP3 and IMP4. Post-translationally, phosphorylated in M (mitotic) phase.

It localises to the nucleus. The protein resides in the nucleolus. Its subcellular location is the chromosome. Functionally, component of the 60-80S U3 small nucleolar ribonucleoprotein (U3 snoRNP). Required for the early cleavages during pre-18S ribosomal RNA processing. Part of the small subunit (SSU) processome, first precursor of the small eukaryotic ribosomal subunit. During the assembly of the SSU processome in the nucleolus, many ribosome biogenesis factors, an RNA chaperone and ribosomal proteins associate with the nascent pre-rRNA and work in concert to generate RNA folding, modifications, rearrangements and cleavage as well as targeted degradation of pre-ribosomal RNA by the RNA exosome. The chain is U3 small nucleolar ribonucleoprotein protein MPP10 (Mphosph10) from Mus musculus (Mouse).